The chain runs to 295 residues: MDVIDHRIKAYRFVAYAAVGFSVVAVLSVCVTLPIVYNYVHYVRKSLHKEASLCKISTNSVWDDVTVLRLAHFGNRTARQAITSSEENGGCESCCRPGPPGPPGPPGRPGRPGRPGAPGLPGVPGLPPPDGSCEPVSIPPCAECPAGPPGPPGKPGPPGDPGEDGQPGPPGQDGIPGQQGTKGPPGPPGIPGKPGESGEVGEDAECEPVAPGDQGPPGEPGPEGPPGEPGLQGPVGMPGQVGQKGESGSDGQLDFDGSPGRPGPPGPPGRPGEPGICPKYCAIDGGIFFEDGTRR.

The disordered stretch occupies residues 81-278 (AITSSEENGG…GRPGEPGICP (198 aa)). 2 stretches are compositionally biased toward pro residues: residues 97-109 (PGPP…PGRP) and 146-160 (AGPP…PPGD). Triple-helical region stretches follow at residues 98–127 (GPPG…PGLP), 147–203 (GPPG…VGED), and 212–277 (GDQG…PGIC). A compositionally biased stretch (low complexity) spans 172 to 182 (QDGIPGQQGTK). The span at 217–228 (PGEPGPEGPPGE) shows a compositional bias: pro residues. A compositionally biased stretch (low complexity) spans 229–244 (PGLQGPVGMPGQVGQK). A compositionally biased stretch (pro residues) spans 261-271 (RPGPPGPPGRP).

This sequence belongs to the cuticular collagen family.

In terms of biological role, nematode cuticles are composed largely of collagen-like proteins. The cuticle functions both as an exoskeleton and as a barrier to protect the worm from its environment. The chain is Cuticle collagen 3A3 (3A3) from Haemonchus contortus (Barber pole worm).